The chain runs to 338 residues: 4-hydroxy-2-oxovalerate aldolase (338 aa).

Residues 6–256 (IHIVDTTLRD…RTGVDFYKVM (251 aa)) form the Pyruvate carboxyltransferase domain. Residue 14–15 (RD) coordinates substrate. Position 15 (Asp-15) interacts with Mn(2+). His-18 serves as the catalytic Proton acceptor. 2 residues coordinate substrate: Ser-168 and His-195. Residues His-195 and His-197 each coordinate Mn(2+). Substrate is bound at residue Tyr-286.

The protein belongs to the 4-hydroxy-2-oxovalerate aldolase family.

It catalyses the reaction (S)-4-hydroxy-2-oxopentanoate = acetaldehyde + pyruvate. The polypeptide is 4-hydroxy-2-oxovalerate aldolase (Moorella thermoacetica (strain ATCC 39073 / JCM 9320)).